A 457-amino-acid chain; its full sequence is Argininosuccinate lyase (457 aa).

This sequence belongs to the lyase 1 family. Argininosuccinate lyase subfamily.

The protein resides in the cytoplasm. The enzyme catalyses 2-(N(omega)-L-arginino)succinate = fumarate + L-arginine. It participates in amino-acid biosynthesis; L-arginine biosynthesis; L-arginine from L-ornithine and carbamoyl phosphate: step 3/3. This Klebsiella pneumoniae subsp. pneumoniae (strain ATCC 700721 / MGH 78578) protein is Argininosuccinate lyase.